A 61-amino-acid chain; its full sequence is Small ribosomal subunit protein uS14 (61 aa).

The Zn(2+) site is built by Cys24, Cys27, Cys40, and Cys43.

Belongs to the universal ribosomal protein uS14 family. Zinc-binding uS14 subfamily. In terms of assembly, part of the 30S ribosomal subunit. Contacts proteins S3 and S10. Zn(2+) serves as cofactor.

Functionally, binds 16S rRNA, required for the assembly of 30S particles and may also be responsible for determining the conformation of the 16S rRNA at the A site. The polypeptide is Small ribosomal subunit protein uS14 (Bifidobacterium longum (strain DJO10A)).